The chain runs to 297 residues: UDP-3-O-acyl-N-acetylglucosamine deacetylase (297 aa).

Zn(2+)-binding residues include H77, H236, and D240. The active-site Proton donor is the H263.

Belongs to the LpxC family. Requires Zn(2+) as cofactor.

The enzyme catalyses a UDP-3-O-[(3R)-3-hydroxyacyl]-N-acetyl-alpha-D-glucosamine + H2O = a UDP-3-O-[(3R)-3-hydroxyacyl]-alpha-D-glucosamine + acetate. It participates in glycolipid biosynthesis; lipid IV(A) biosynthesis; lipid IV(A) from (3R)-3-hydroxytetradecanoyl-[acyl-carrier-protein] and UDP-N-acetyl-alpha-D-glucosamine: step 2/6. Its function is as follows. Catalyzes the hydrolysis of UDP-3-O-myristoyl-N-acetylglucosamine to form UDP-3-O-myristoylglucosamine and acetate, the committed step in lipid A biosynthesis. This chain is UDP-3-O-acyl-N-acetylglucosamine deacetylase, found in Psychrobacter sp. (strain PRwf-1).